Reading from the N-terminus, the 360-residue chain is Methylthioribose-1-phosphate isomerase (360 aa).

The active-site Proton donor is D252.

It belongs to the eIF-2B alpha/beta/delta subunits family. MtnA subfamily.

The protein localises to the cytoplasm. It is found in the nucleus. The enzyme catalyses 5-(methylsulfanyl)-alpha-D-ribose 1-phosphate = 5-(methylsulfanyl)-D-ribulose 1-phosphate. It functions in the pathway amino-acid biosynthesis; L-methionine biosynthesis via salvage pathway; L-methionine from S-methyl-5-thio-alpha-D-ribose 1-phosphate: step 1/6. Catalyzes the interconversion of methylthioribose-1-phosphate (MTR-1-P) into methylthioribulose-1-phosphate (MTRu-1-P). This Trichoplax adhaerens (Trichoplax reptans) protein is Methylthioribose-1-phosphate isomerase.